Reading from the N-terminus, the 367-residue chain is 3-dehydroquinate synthase (367 aa).

Residues 108–112 (GVIGD), 132–133 (TT), Lys145, and Lys154 each bind NAD(+). The Zn(2+) site is built by Glu187, His249, and His267.

This sequence belongs to the sugar phosphate cyclases superfamily. Dehydroquinate synthase family. Co(2+) serves as cofactor. Requires Zn(2+) as cofactor. NAD(+) is required as a cofactor.

The protein localises to the cytoplasm. The catalysed reaction is 7-phospho-2-dehydro-3-deoxy-D-arabino-heptonate = 3-dehydroquinate + phosphate. It participates in metabolic intermediate biosynthesis; chorismate biosynthesis; chorismate from D-erythrose 4-phosphate and phosphoenolpyruvate: step 2/7. Its function is as follows. Catalyzes the conversion of 3-deoxy-D-arabino-heptulosonate 7-phosphate (DAHP) to dehydroquinate (DHQ). This chain is 3-dehydroquinate synthase, found in Paracoccus denitrificans (strain Pd 1222).